The chain runs to 962 residues: Glycine dehydrogenase (decarboxylating) (962 aa).

At Lys709 the chain carries N6-(pyridoxal phosphate)lysine.

It belongs to the GcvP family. In terms of assembly, the glycine cleavage system is composed of four proteins: P, T, L and H. It depends on pyridoxal 5'-phosphate as a cofactor.

The enzyme catalyses N(6)-[(R)-lipoyl]-L-lysyl-[glycine-cleavage complex H protein] + glycine + H(+) = N(6)-[(R)-S(8)-aminomethyldihydrolipoyl]-L-lysyl-[glycine-cleavage complex H protein] + CO2. In terms of biological role, the glycine cleavage system catalyzes the degradation of glycine. The P protein binds the alpha-amino group of glycine through its pyridoxal phosphate cofactor; CO(2) is released and the remaining methylamine moiety is then transferred to the lipoamide cofactor of the H protein. This Shewanella baltica (strain OS195) protein is Glycine dehydrogenase (decarboxylating).